A 259-amino-acid polypeptide reads, in one-letter code: Imidazole glycerol phosphate synthase subunit HisF (259 aa).

Catalysis depends on residues Asp-11 and Asp-130.

This sequence belongs to the HisA/HisF family. As to quaternary structure, heterodimer of HisH and HisF.

The protein localises to the cytoplasm. It catalyses the reaction 5-[(5-phospho-1-deoxy-D-ribulos-1-ylimino)methylamino]-1-(5-phospho-beta-D-ribosyl)imidazole-4-carboxamide + L-glutamine = D-erythro-1-(imidazol-4-yl)glycerol 3-phosphate + 5-amino-1-(5-phospho-beta-D-ribosyl)imidazole-4-carboxamide + L-glutamate + H(+). Its pathway is amino-acid biosynthesis; L-histidine biosynthesis; L-histidine from 5-phospho-alpha-D-ribose 1-diphosphate: step 5/9. In terms of biological role, IGPS catalyzes the conversion of PRFAR and glutamine to IGP, AICAR and glutamate. The HisF subunit catalyzes the cyclization activity that produces IGP and AICAR from PRFAR using the ammonia provided by the HisH subunit. The chain is Imidazole glycerol phosphate synthase subunit HisF from Desulfovibrio desulfuricans (strain ATCC 27774 / DSM 6949 / MB).